Consider the following 450-residue polypeptide: Bifunctional apoptosis regulator (450 aa).

A disordered region spans residues 1–20 (MEEPQKSYVNTMDLERDEPL). At 1–140 (MEEPQKSYVN…PNTGRANQQM (140 aa)) the chain is on the cytoplasmic side. An RING-type zinc finger spans residues 34–74 (CHCCYDILVNPTTLNCGHSFCRHCLALWWASSKKTECPECR). A helical transmembrane segment spans residues 141 to 161 (GGGFFSGVLTALTGVAVVLLV). The Lumenal portion of the chain corresponds to 162 to 331 (YHWSSRESEH…KEPTWKQWRE (170 aa)). The 68-residue stretch at 182 to 249 (WTAEEVVLWL…LMELERVKAL (68 aa)) folds into the SAM domain. N-linked (GlcNAc...) asparagine glycosylation occurs at Asn232. A helical membrane pass occupies residues 332–352 (FLVKYSFLPYQLIAEFAWDWL). Residues 353–360 (EVHYWTSR) lie on the Cytoplasmic side of the membrane. Residues 361–381 (FLIINAMLLSVLELFSFWRIW) traverse the membrane as a helical segment. Over 382-404 (SRSELKTVPQRMWSHFWKVSTQG) the chain is Lumenal. A helical membrane pass occupies residues 405-425 (LFVAMFWPLIPQFVCNCLFYW). Residues 426–450 (ALYFNPIINIDLVVKELRRLETQVL) are Cytoplasmic-facing.

Interacts with CASP8, BCL2 and BCL2L1 through SAM domain and also with HIP1, IFT57, ESRRBL1 and BCAP31. Interacts with NGFR; this interaction inhibits NF-kappa-B and JNK-related signaling pathways. Mediates RING-dependent self-ubiquitination leading to proteasomal degradation. In terms of tissue distribution, expressed highly in brain, moderately in small intestine, weakly in testes and only faintly in liver and skeletal muscle. Not expressed in heart, kidney, lung and spleen.

The protein resides in the endoplasmic reticulum membrane. It catalyses the reaction S-ubiquitinyl-[E2 ubiquitin-conjugating enzyme]-L-cysteine + [acceptor protein]-L-lysine = [E2 ubiquitin-conjugating enzyme]-L-cysteine + N(6)-ubiquitinyl-[acceptor protein]-L-lysine.. Its function is as follows. Membrane-bound E3 ubiquitin ligase that plays a role in several processes including apoptosis regulation or reticulum endoplasmic stress. Has anti-apoptotic activity, both for apoptosis triggered via death-receptors and via mitochondrial factors. Contributes to the dynamic control of IRE1/ERN1 signaling during ER stress by inducing BAX inhibitor 1/TMBIM6 proteasomal degradation. Promotes the activation of TGF-beta signaling by mediating the 'Lys-63'-linked ubiquitination of TGFBR1 which is critical to activate the pathway. Together with NGFR, negatively regulates NF-kappa-B and JNK-related signaling pathways. Promotes the proteasome-mediated degradation of PNPLA3, a protein involveld in lipid metabolism. In Homo sapiens (Human), this protein is Bifunctional apoptosis regulator (BFAR).